The following is a 97-amino-acid chain: Co-chaperonin GroES (97 aa).

Belongs to the GroES chaperonin family. As to quaternary structure, heptamer of 7 subunits arranged in a ring. Interacts with the chaperonin GroEL.

Its subcellular location is the cytoplasm. Functionally, together with the chaperonin GroEL, plays an essential role in assisting protein folding. The GroEL-GroES system forms a nano-cage that allows encapsulation of the non-native substrate proteins and provides a physical environment optimized to promote and accelerate protein folding. GroES binds to the apical surface of the GroEL ring, thereby capping the opening of the GroEL channel. This Symbiobacterium thermophilum (strain DSM 24528 / JCM 14929 / IAM 14863 / T) protein is Co-chaperonin GroES.